The following is a 250-amino-acid chain: uncharacterized protein (250 aa).

The protein belongs to the glycosyltransferase 2 family.

This is an uncharacterized protein from Haemophilus influenzae (strain ATCC 51907 / DSM 11121 / KW20 / Rd).